The sequence spans 525 residues: GMP synthase [glutamine-hydrolyzing] (525 aa).

Residues 12-206 (RILIIDFGSQ…THGICGCGGD (195 aa)) enclose the Glutamine amidotransferase type-1 domain. The Nucleophile role is filled by cysteine 90. Residues histidine 180 and glutamate 182 contribute to the active site. The GMPS ATP-PPase domain maps to 207 to 399 (WTMAAFKDQA…LGLPDEMVGR (193 aa)). 234-240 (SGGVDSS) serves as a coordination point for ATP.

In terms of assembly, homodimer.

The enzyme catalyses XMP + L-glutamine + ATP + H2O = GMP + L-glutamate + AMP + diphosphate + 2 H(+). The protein operates within purine metabolism; GMP biosynthesis; GMP from XMP (L-Gln route): step 1/1. Its function is as follows. Catalyzes the synthesis of GMP from XMP. The protein is GMP synthase [glutamine-hydrolyzing] of Rhodospirillum rubrum (strain ATCC 11170 / ATH 1.1.1 / DSM 467 / LMG 4362 / NCIMB 8255 / S1).